A 207-amino-acid chain; its full sequence is Small heat shock protein hspG7 (207 aa).

The region spanning 30 to 207 (KTIIDILPPM…YSNTIKININ (178 aa)) is the sHSP domain. 2 stretches are compositionally biased toward low complexity: residues 84-101 (QQQQLVIEKSSTSPSSST) and 122-135 (STTSTTTVSTATTT). Residues 84-149 (QQQQLVIEKS…EDENKTKSSD (66 aa)) form a disordered region. The span at 136 to 149 (KENKEDENKTKSSD) shows a compositional bias: basic and acidic residues.

The protein belongs to the small heat shock protein (HSP20) family.

The sequence is that of Small heat shock protein hspG7 (hspG7) from Dictyostelium discoideum (Social amoeba).